Consider the following 305-residue polypeptide: uncharacterized protein (305 aa).

A compositionally biased stretch (basic residues) spans 1–10 (MLWAQRKKRK). The interval 1–30 (MLWAQRKKRKATTETTEDKPAESHRPNDSW) is disordered. A compositionally biased stretch (basic and acidic residues) spans 16 to 27 (TEDKPAESHRPN). A Phosphoserine modification is found at serine 39. The segment covering 92–101 (QKISGTSVSK) has biased composition (polar residues). The disordered stretch occupies residues 92–114 (QKISGTSVSKEMQRESGKSPSME). Serine 158 is modified (phosphoserine). The span at 197–208 (SHHGNQSHQNHN) shows a compositional bias: low complexity. The segment at 197–305 (SHHGNQSHQN…VNRRNQIYDS (109 aa)) is disordered. Composition is skewed to polar residues over residues 209–221 (TYPC…SRSV) and 231–244 (LSHQ…SHQN). Residues 247–293 (GHPSQQGHSSHSNQQGHLGLSSQQGHPSQSSHQSHQGQPGHPNHQSH) show a composition bias toward low complexity. A compositionally biased stretch (polar residues) spans 294 to 305 (SLVNRRNQIYDS).

This is an uncharacterized protein from Rattus norvegicus (Rat).